The sequence spans 397 residues: Odorant receptor 22b (397 aa).

The Cytoplasmic portion of the chain corresponds to 1–49; it reads MLSQFFPHIKEKPLSERVKSRDAFVYLDRVMWSFGWTVPENKRWDLHYK. A helical membrane pass occupies residues 50–70; sequence LWSTFVTLLIFILLPISVSVE. Residues 71–85 are Extracellular-facing; sequence YIQRFKTFSAGEFLS. A helical transmembrane segment spans residues 86–105; sequence SIQIGVNMYGSSFKSYLTMM. Residues 106–143 are Cytoplasmic-facing; sequence GYKKRQEAKMSLDELDKRCVCDEERTIVHRHVALGNFC. The chain crosses the membrane as a helical span at residues 144–164; it reads YIFYHIAYTSFLISNFLSFIM. Topologically, residues 165–194 are extracellular; the sequence is KRIHAWRMYFPYVDPEKQFYISSIAEVILR. The helical transmembrane segment at 195–215 threads the bilayer; that stretch reads GWAVFMDLCTDVCPLISMVIA. At 216–268 the chain is on the cytoplasmic side; it reads RCHITLLKQRLRNLRSEPGRTEDEYLKELADCVRDHRLILDYVDALRSVFSGT. Residues 269–289 form a helical membrane-spanning segment; sequence IFVQFLLIGIVLGLSMINIMF. Over 290 to 295 the chain is Extracellular; that stretch reads FSTLST. The chain crosses the membrane as a helical span at residues 296–316; the sequence is GVAVVLFMSCVSMQTFPFCYL. Residues 317–347 lie on the Cytoplasmic side of the membrane; the sequence is CNMIMDDCQEMADSLFQSDWTSADRRYKSTL. The chain crosses the membrane as a helical span at residues 348–368; the sequence is VYFLHNLQQPIILTAGGVFPI. Residues 369 to 397 are Extracellular-facing; the sequence is SMQTNLNMVKLAFTVVTIVKQFNLAEKFQ.

This sequence belongs to the insect chemoreceptor superfamily. Heteromeric odorant receptor channel (TC 1.A.69) family. Or2a subfamily. Interacts with Orco, via conserved C-terminal cytoplasmic loops. Complexes exist early in the endomembrane system in olfactory sensory neurons (OSNs), coupling these complexes to the conserved ciliary trafficking pathway. Expressed with Orco in 20-22 sensory neurons on the medial-proximal edge of the antenna. This expression pattern matches the distribution of the large sensilla basiconica. Expression is first seen at 60 hours APF in a subset of cells restricted to a subregion of the developing antenna. Expression continues throughout antennal development. Expressed in the ab3A neuron which responds to ethyl butyrate.

The protein resides in the cell membrane. Odorant receptor which mediates acceptance or avoidance behavior, depending on its substrates. The odorant receptor repertoire encodes a large collection of odor stimuli that vary widely in identity, intensity, and duration. Involved in the behavioral responses to esters. Complexes with Orco to form odorant-sensing units, providing sensitive and prolonged odorant signaling and calcium permeability. They are necessary and sufficient to promote functional reconstitution of odor-evoked signaling in sensory neurons that normally respond only to carbon dioxide. The polypeptide is Odorant receptor 22b (Or22b) (Drosophila melanogaster (Fruit fly)).